Reading from the N-terminus, the 395-residue chain is Acid ceramidase (395 aa).

Positions 1-21 (MLGRSRLTFVLLAAAVTCAEA) are cleaved as a signal peptide. Cysteine 31 and cysteine 340 are joined by a disulfide. Catalysis depends on cysteine 143, which acts as the Nucleophile. N-linked (GlcNAc...) asparagine glycans are attached at residues asparagine 173, asparagine 259, asparagine 286, and asparagine 348. A disulfide bridge links cysteine 388 with cysteine 392.

It belongs to the acid ceramidase family. As to quaternary structure, heterodimer; disulfide-linked. The heterodimer is composed of the disulfide-linked alpha and beta chains produced by autocatalytic cleavage of the precursor. Post-translationally, N-glycosylated. Proteolytically cleaved into two chains alpha and beta that remain associated via a disulfide bond. Cleavage gives rise to a conformation change that activates the enzyme. The same catalytic Cys residue mediates the autoproteolytic cleavage and subsequent hydrolysis of lipid substrates. The beta chain may undergo an additional C-terminal processing.

Its subcellular location is the lysosome. It is found in the secreted. The catalysed reaction is an N-acylsphing-4-enine + H2O = sphing-4-enine + a fatty acid. It carries out the reaction N-dodecanoylsphing-4-enine + H2O = dodecanoate + sphing-4-enine. It catalyses the reaction N-tetradecanoylsphing-4-enine + H2O = tetradecanoate + sphing-4-enine. The enzyme catalyses N-hexadecanoylsphing-4-enine + H2O = sphing-4-enine + hexadecanoate. The catalysed reaction is N-octadecanoylsphing-4-enine + H2O = sphing-4-enine + octadecanoate. It carries out the reaction N-dodecanoyl-(4R)-hydroxysphinganine + H2O = (4R)-hydroxysphinganine + dodecanoate. It catalyses the reaction N-(dodecanoyl)-sphinganine + H2O = dodecanoate + sphinganine. The enzyme catalyses N-(acetyl)-sphing-4-enine + H2O = sphing-4-enine + acetate. The catalysed reaction is N-(hexanoyl)sphing-4-enine + H2O = hexanoate + sphing-4-enine. It carries out the reaction N-octanoylsphing-4-enine + H2O = octanoate + sphing-4-enine. It catalyses the reaction N-(9Z-octadecenoyl)-sphing-4-enine + H2O = sphing-4-enine + (9Z)-octadecenoate. The enzyme catalyses N-dodecanoylethanolamine + H2O = dodecanoate + ethanolamine. It functions in the pathway lipid metabolism; sphingolipid metabolism. Lysosomal ceramidase that hydrolyzes sphingolipid ceramides into sphingosine and free fatty acids at acidic pH. Ceramides, sphingosine, and its phosphorylated form sphingosine-1-phosphate are bioactive lipids that mediate cellular signaling pathways regulating several biological processes including cell proliferation, apoptosis and differentiation. Has a higher catalytic efficiency towards C12-ceramides versus other ceramides. Also catalyzes the reverse reaction allowing the synthesis of ceramides from fatty acids and sphingosine. For the reverse synthetic reaction, the natural sphingosine D-erythro isomer is more efficiently utilized as a substrate compared to D-erythro-dihydrosphingosine and D-erythro-phytosphingosine, while the fatty acids with chain lengths of 12 or 14 carbons are the most efficiently used. Also has an N-acylethanolamine hydrolase activity. By regulating the levels of ceramides, sphingosine and sphingosine-1-phosphate in the epidermis, mediates the calcium-induced differentiation of epidermal keratinocytes. Also indirectly regulates tumor necrosis factor/TNF-induced apoptosis. By regulating the intracellular balance between ceramides and sphingosine, in adrenocortical cells, probably also acts as a regulator of steroidogenesis. The chain is Acid ceramidase from Heterocephalus glaber (Naked mole rat).